The primary structure comprises 822 residues: Pentatricopeptide repeat-containing protein At2g18940, chloroplastic (822 aa).

The tract at residues 1 to 42 is disordered; sequence MDGALFPHKPPYPIQSKRPPPSQSSNQSIKFSSATLHLPPPS. Residues 1–77 constitute a chloroplast transit peptide; the sequence is MDGALFPHKP…SAAARFPSLE (77 aa). Over residues 8–22 the composition is skewed to pro residues; that stretch reads HKPPYPIQSKRPPPS. The segment covering 23-37 has biased composition (low complexity); sequence QSSNQSIKFSSATLH. PPR repeat units follow at residues 209 to 243, 244 to 279, 280 to 314, 315 to 349, 350 to 384, 385 to 419, 420 to 454, 455 to 489, 490 to 524, 525 to 559, 560 to 594, 595 to 629, 630 to 664, 665 to 699, 700 to 734, 735 to 769, and 770 to 800; these read DVRA…GPSP, TLVT…GLKF, DEFT…GYEP, GTVT…SCPA, DSVT…GVMP, NAIT…GCVP, NTCT…GCSP, NRAT…GFEP, DRDT…GFNA, CVTT…GFKP, TETS…QIFP, SWML…GYKP, DMVI…GLSP, DLVT…QLKP, DLVS…GIRP, CIFT…DCRP, and NELT…IKTF.

The protein belongs to the PPR family. P subfamily.

It is found in the plastid. Its subcellular location is the chloroplast. The protein is Pentatricopeptide repeat-containing protein At2g18940, chloroplastic of Arabidopsis thaliana (Mouse-ear cress).